A 465-amino-acid chain; its full sequence is Ribulose bisphosphate carboxylase large chain (465 aa).

An N6,N6,N6-trimethyllysine modification is found at Lys4. Substrate contacts are provided by Asn113 and Thr163. The Proton acceptor role is filled by Lys165. Lys167 lines the substrate pocket. 3 residues coordinate Mg(2+): Lys191, Asp193, and Glu194. N6-carboxylysine is present on Lys191. The active-site Proton acceptor is His284. Substrate contacts are provided by Arg285, His317, and Ser369.

It belongs to the RuBisCO large chain family. Type I subfamily. In terms of assembly, heterohexadecamer of 8 large chains and 8 small chains; disulfide-linked. The disulfide link is formed within the large subunit homodimers. It depends on Mg(2+) as a cofactor. In terms of processing, the disulfide bond which can form in the large chain dimeric partners within the hexadecamer appears to be associated with oxidative stress and protein turnover.

Its subcellular location is the plastid. The protein resides in the chloroplast. The catalysed reaction is 2 (2R)-3-phosphoglycerate + 2 H(+) = D-ribulose 1,5-bisphosphate + CO2 + H2O. It carries out the reaction D-ribulose 1,5-bisphosphate + O2 = 2-phosphoglycolate + (2R)-3-phosphoglycerate + 2 H(+). In terms of biological role, ruBisCO catalyzes two reactions: the carboxylation of D-ribulose 1,5-bisphosphate, the primary event in carbon dioxide fixation, as well as the oxidative fragmentation of the pentose substrate in the photorespiration process. Both reactions occur simultaneously and in competition at the same active site. The protein is Ribulose bisphosphate carboxylase large chain of Cassia fistula (Golden shower tree).